We begin with the raw amino-acid sequence, 395 residues long: Elongation factor Tu (395 aa).

A tr-type G domain is found at 10 to 204 (KPHVNVGTIG…AVDAYIDTPL (195 aa)). Residues 19 to 26 (GHVDHGKT) form a G1 region. 19-26 (GHVDHGKT) contributes to the GTP binding site. T26 is a binding site for Mg(2+). Residues 60–64 (GITIN) are G2. Residues 81 to 84 (DCPG) are G3. Residues 81-85 (DCPGH) and 136-139 (NKAD) each bind GTP. The tract at residues 136-139 (NKAD) is G4. The G5 stretch occupies residues 174–176 (SAL).

The protein belongs to the TRAFAC class translation factor GTPase superfamily. Classic translation factor GTPase family. EF-Tu/EF-1A subfamily. In terms of assembly, monomer.

It localises to the cytoplasm. The catalysed reaction is GTP + H2O = GDP + phosphate + H(+). In terms of biological role, GTP hydrolase that promotes the GTP-dependent binding of aminoacyl-tRNA to the A-site of ribosomes during protein biosynthesis. This is Elongation factor Tu from Acholeplasma laidlawii (strain PG-8A).